Reading from the N-terminus, the 198-residue chain is MRTFILKANTAVTSPDFSLKDLPGTGGRIDLLCRFLNSAFLLSHGIRKDVRVFMTLYGRPNPPKTIHFEGPKLKVRLNPDERSTALILKKALKIGEDLREPTKEVEVFPGVYVSNMTFEDVVRRVMKDSTLYYLVEDGKPITEIEFPQNPAFVLGDHLGLSKEDERFLEGIAKKVRIGRRSYLASHVVAFVNIWLDGM.

Positions 134 and 155 each coordinate S-adenosyl-L-methionine.

Belongs to the methyltransferase superfamily. TrmY family. As to quaternary structure, homodimer.

Its subcellular location is the cytoplasm. It carries out the reaction pseudouridine(54) in tRNA + S-adenosyl-L-methionine = N(1)-methylpseudouridine(54) in tRNA + S-adenosyl-L-homocysteine + H(+). Specifically catalyzes the N1-methylation of pseudouridine at position 54 (Psi54) in tRNAs. The chain is tRNA (pseudouridine(54)-N(1))-methyltransferase from Thermococcus kodakarensis (strain ATCC BAA-918 / JCM 12380 / KOD1) (Pyrococcus kodakaraensis (strain KOD1)).